Reading from the N-terminus, the 210-residue chain is MLLSVVAIALLAYLLGSFPAGYLAGRWLKGIDIRKEGSGSTGATNVLRVLGKGPALVVFITDILKGVLAVVAARAIASTNGLDPSAIAWLAAFAAIIAVVGHSLPVWLSFRGGKSVATSLGVLLALSPVVGLSGFGAFLLLLALFRIVSLGSIAGAITVIVLMLILPEPLPNKILGIASGIYVIYRHRSNLDRLRRGEEPRIGQRLSTNR.

Transmembrane regions (helical) follow at residues Met1–Gly21, Gly53–Ala73, Ile87–Trp107, Val122–Leu142, and Ile147–Pro167.

The protein belongs to the PlsY family. In terms of assembly, probably interacts with PlsX.

The protein localises to the cell inner membrane. It catalyses the reaction an acyl phosphate + sn-glycerol 3-phosphate = a 1-acyl-sn-glycero-3-phosphate + phosphate. It participates in lipid metabolism; phospholipid metabolism. Functionally, catalyzes the transfer of an acyl group from acyl-phosphate (acyl-PO(4)) to glycerol-3-phosphate (G3P) to form lysophosphatidic acid (LPA). This enzyme utilizes acyl-phosphate as fatty acyl donor, but not acyl-CoA or acyl-ACP. The protein is Glycerol-3-phosphate acyltransferase of Synechococcus elongatus (strain ATCC 33912 / PCC 7942 / FACHB-805) (Anacystis nidulans R2).